We begin with the raw amino-acid sequence, 77 residues long: Translation initiation factor IF-1, chloroplastic (77 aa).

Positions 1 to 71 (MKEQKLIHEG…TKGRIIYRLR (71 aa)) constitute an S1-like domain.

Belongs to the IF-1 family. In terms of assembly, component of the 30S ribosomal translation pre-initiation complex which assembles on the 30S ribosome in the order IF-2 and IF-3, IF-1 and N-formylmethionyl-tRNA(fMet); mRNA recruitment can occur at any time during PIC assembly.

The protein localises to the plastid. It is found in the chloroplast. One of the essential components for the initiation of protein synthesis. Stabilizes the binding of IF-2 and IF-3 on the 30S subunit to which N-formylmethionyl-tRNA(fMet) subsequently binds. Helps modulate mRNA selection, yielding the 30S pre-initiation complex (PIC). Upon addition of the 50S ribosomal subunit IF-1, IF-2 and IF-3 are released leaving the mature 70S translation initiation complex. The protein is Translation initiation factor IF-1, chloroplastic of Dioscorea elephantipes (Elephant's foot yam).